A 323-amino-acid chain; its full sequence is Delta-aminolevulinic acid dehydratase (323 aa).

Zn(2+) contacts are provided by C118, C120, and C128. Residue K193 is the Schiff-base intermediate with substrate of the active site. 5-aminolevulinate-binding residues include R203 and R215. E231 is a Mg(2+) binding site. Catalysis depends on K246, which acts as the Schiff-base intermediate with substrate. Residues S272 and Y311 each coordinate 5-aminolevulinate.

The protein belongs to the ALAD family. Homooctamer. Requires Zn(2+) as cofactor.

It carries out the reaction 2 5-aminolevulinate = porphobilinogen + 2 H2O + H(+). Its pathway is porphyrin-containing compound metabolism; protoporphyrin-IX biosynthesis; coproporphyrinogen-III from 5-aminolevulinate: step 1/4. In terms of biological role, catalyzes an early step in the biosynthesis of tetrapyrroles. Binds two molecules of 5-aminolevulinate per subunit, each at a distinct site, and catalyzes their condensation to form porphobilinogen. This is Delta-aminolevulinic acid dehydratase (hemB) from Helicobacter pylori (strain J99 / ATCC 700824) (Campylobacter pylori J99).